Reading from the N-terminus, the 199-residue chain is Pneumococcal vaccine antigen A homolog (199 aa).

It localises to the cell surface. The sequence is that of Pneumococcal vaccine antigen A homolog (pvaA) from Streptococcus pyogenes serotype M6 (strain ATCC BAA-946 / MGAS10394).